The primary structure comprises 354 residues: Peptide chain release factor 1 (354 aa).

The residue at position 231 (Q231) is an N5-methylglutamine.

The protein belongs to the prokaryotic/mitochondrial release factor family. Post-translationally, methylated by PrmC. Methylation increases the termination efficiency of RF1.

The protein localises to the cytoplasm. In terms of biological role, peptide chain release factor 1 directs the termination of translation in response to the peptide chain termination codons UAG and UAA. In Acholeplasma laidlawii (strain PG-8A), this protein is Peptide chain release factor 1.